An 81-amino-acid chain; its full sequence is Protein I5 homolog (81 aa).

The next 2 helical transmembrane spans lie at 8-28 and 53-73; these read LITI…FSLV and MEIF…AAYI.

Belongs to the Chordopoxvirinae I5 family.

The protein resides in the virion membrane. The protein is Protein I5 homolog of Vertebrata (FPV).